The primary structure comprises 329 residues: Phenylalanine--tRNA ligase alpha subunit (329 aa).

A Mg(2+)-binding site is contributed by E254.

Belongs to the class-II aminoacyl-tRNA synthetase family. Phe-tRNA synthetase alpha subunit type 1 subfamily. In terms of assembly, tetramer of two alpha and two beta subunits. It depends on Mg(2+) as a cofactor.

It localises to the cytoplasm. The enzyme catalyses tRNA(Phe) + L-phenylalanine + ATP = L-phenylalanyl-tRNA(Phe) + AMP + diphosphate + H(+). The protein is Phenylalanine--tRNA ligase alpha subunit (pheS) of Haemophilus influenzae (strain ATCC 51907 / DSM 11121 / KW20 / Rd).